Here is a 97-residue protein sequence, read N- to C-terminus: Defensin-like protein 245 (97 aa).

The signal sequence occupies residues Met1–Gly24. Intrachain disulfides connect Cys39-Cys96, Cys50-Cys79, Cys58-Cys89, and Cys77-Cys91.

It belongs to the DEFL family. As to expression, flower buds and roots.

The protein resides in the secreted. This is Defensin-like protein 245 (SCRL4) from Arabidopsis thaliana (Mouse-ear cress).